Reading from the N-terminus, the 237-residue chain is MSQPFFQFKQFTVWHDKCAMKVGTDGVLLGAWTPVESSARILDIGTGTGLVALMLAQRCSASVIALEIDGTAAQQAAENITRSPWGSRIEVVCQDFRLYSNKNNSLKYDTIVSNPPYFTDSLKCPDSQRNTARHNDNLSYEELLKGVSNLLSPNGTFTVVIPMDASDSFKDIASSQGLYPSRQLLVITKPGAPPKRTLISFTFIKQDCKEEKLLTEVSRHRYSDEYIKLTREFYLKM.

It belongs to the methyltransferase superfamily. tRNA (adenine-N(6)-)-methyltransferase family.

It is found in the cytoplasm. It carries out the reaction adenosine(37) in tRNA1(Val) + S-adenosyl-L-methionine = N(6)-methyladenosine(37) in tRNA1(Val) + S-adenosyl-L-homocysteine + H(+). In terms of biological role, specifically methylates the adenine in position 37 of tRNA(1)(Val) (anticodon cmo5UAC). This is tRNA1(Val) (adenine(37)-N6)-methyltransferase from Bacteroides fragilis (strain ATCC 25285 / DSM 2151 / CCUG 4856 / JCM 11019 / LMG 10263 / NCTC 9343 / Onslow / VPI 2553 / EN-2).